Reading from the N-terminus, the 224-residue chain is UPF0758 protein PM1152 (224 aa).

Positions 102-224 constitute an MPN domain; the sequence is AFKNSENVRF…YYSFAENRLL (123 aa). Positions 173, 175, and 186 each coordinate Zn(2+). The JAMM motif motif lies at 173–186; sequence HNHPSGNPEPSASD.

Belongs to the UPF0758 family.

The chain is UPF0758 protein PM1152 from Pasteurella multocida (strain Pm70).